Consider the following 124-residue polypeptide: MFSFIDDIPSFEQIKARVRDDLRKHGWEKRWNDSRLVQKSRELLNDEELKIDPATWIWKRMPSREEVAARRQRDFETVWKYRYRLGGFASGALLALALAGIFSTGNFGGSSDAGNRPSVVYPIE.

Residues 85 to 102 (LGGFASGALLALALAGIF) form a helical membrane-spanning segment.

Its subcellular location is the cell inner membrane. In terms of biological role, component of the ubiquinol-cytochrome c reductase complex (complex III or cytochrome b-c1 complex), which is a respiratory chain that generates an electrochemical potential coupled to ATP synthesis. This Cereibacter sphaeroides (Rhodobacter sphaeroides) protein is 14 kDa peptide of ubiquinol-cytochrome c2 oxidoreductase complex.